A 464-amino-acid polypeptide reads, in one-letter code: Lysosomal proton-coupled steroid conjugate and bile acid symporter SLC46A3 (464 aa).

Positions 1 to 26 (MRKVLLVEPVIFIYIFASSLTSPVVQ) are cleaved as a signal peptide. Over 27 to 71 (QFIYRKLWEEEYNSTAISSDNSSHCERNKSSPTYVMEKAIQEKTS) the chain is Extracellular. Residues Asn-39, Asn-47, and Asn-54 are each glycosylated (N-linked (GlcNAc...) asparagine). A helical transmembrane segment spans residues 72–92 (FFNMQLDLTGAVPSLIVAFII). At 93–104 (VANGDHQGRKKS) the chain is on the cytoplasmic side. Residues 105–125 (LVLPSIGALIADIFLTIVSYF) traverse the membrane as a helical segment. The Extracellular portion of the chain corresponds to 126–130 (SWPTS). The helical transmembrane segment at 131 to 151 (VLFLATFISGLFGSMATFLGG) threads the bilayer. The Cytoplasmic segment spans residues 152 to 171 (GFAYIADQCHDEKQKTTRIA). The chain crosses the membrane as a helical span at residues 172-192 (VIDLIFGVVSGLAGLSSGYFL). At 193–198 (REMGFT) the chain is on the extracellular side. The chain crosses the membrane as a helical span at residues 199 to 219 (WTFATASLLHVVNIIYITFFL). Residues 220-259 (QDTVHISEFQQQAPLSYKEHLKETFSGVYMLFKTAPSKKR) are Cytoplasmic-facing. Residues 260–280 (ILIIVLLFIFMTYLFTMFGGS) traverse the membrane as a helical segment. Residues 281–296 (SLFTLYELDEPLCWTE) lie on the Extracellular side of the membrane. The helical transmembrane segment at 297 to 317 (VYIGYGAAAFTSISLTSFLGV) threads the bilayer. Residues 318–326 (YLFSKCLKD) are Cytoplasmic-facing. A helical membrane pass occupies residues 327–347 (IYIVFIGIFSYIGGIVMAAFA). Over 348 to 349 (KT) the chain is Extracellular. The helical transmembrane segment at 350–370 (TLLMFLVRVPSLFSIMPIPVL) threads the bilayer. Residues 371-384 (RSMLSKVVLPSEQG) lie on the Cytoplasmic side of the membrane. Residues 385 to 405 (AVFACIACLEVLTGTISLSVF) traverse the membrane as a helical segment. The Extracellular portion of the chain corresponds to 406–418 (NVIYAATVAWFSG). The chain crosses the membrane as a helical span at residues 419-439 (FSFLLSASLCLIPLGVLCWLL). At 440 to 464 (CTSWNGEDLALLVPEEVSSIDSVDS) the chain is on the cytoplasmic side.

Belongs to the major facilitator superfamily. SLC46A family.

The protein resides in the lysosome membrane. It catalyses the reaction estrone 3-sulfate(out) + n H(+)(out) = estrone 3-sulfate(in) + n H(+)(in). The enzyme catalyses 25-hydroxyvitamin D3 sulfate(out) + n H(+)(out) = 25-hydroxyvitamin D3 sulfate(in) + n H(+)(in). It carries out the reaction cholate(out) + n H(+)(out) = cholate(in) + n H(+)(in). The catalysed reaction is glycocholate(out) + n H(+)(out) = glycocholate(in) + n H(+)(in). It catalyses the reaction taurocholate(out) + n H(+)(out) = taurocholate(in) + n H(+)(in). The enzyme catalyses dehydroepiandrosterone 3-sulfate(out) + n H(+)(out) = dehydroepiandrosterone 3-sulfate(in) + n H(+)(in). In terms of biological role, lysosomal proton-coupled steroid conjugate and bile acid transporter. Preferentially recognizes lipophilic steroid conjugates or bile acis as endogenous substrates and seems to mediate escape from lysosomes to the cytoplasm. Modulates hepatic cytosolic copper homeostasis, maybe acting as a lysosomal copper transporter and sequestering copper ions in the lysosome. In Gallus gallus (Chicken), this protein is Lysosomal proton-coupled steroid conjugate and bile acid symporter SLC46A3 (SLC46A3).